We begin with the raw amino-acid sequence, 153 residues long: MGKKSSTGTGKTNLKILACLLLIFLMATIFLLILEIISGQRYSNDDSEGVTAALKHVSTPTTNCTETTTPDSVTSQAMENKESMKKNEGEPPVWIQALTTTLSIILLVCIIMACIICSRTTEEEKSEMQSSASSVETLQSLNEAIFPKGEMNV.

2 helical membrane passes run 16–36 and 97–117; these read ILAC…ILEI and ALTT…CIIC.

The protein localises to the membrane. This is an uncharacterized protein from Human herpesvirus 6A (strain Uganda-1102) (HHV-6 variant A).